We begin with the raw amino-acid sequence, 592 residues long: NADH-quinone oxidoreductase subunit C/D (592 aa).

An NADH dehydrogenase I subunit C region spans residues 1 to 183 (MSAAQSPTAQ…DPYTLTVEGQ (183 aa)). The NADH dehydrogenase I subunit D stretch occupies residues 207–592 (DYMFLNLGPN…IDFVMADVDR (386 aa)).

This sequence in the N-terminal section; belongs to the complex I 30 kDa subunit family. It in the C-terminal section; belongs to the complex I 49 kDa subunit family. As to quaternary structure, NDH-1 is composed of 13 different subunits. Subunits NuoB, CD, E, F, and G constitute the peripheral sector of the complex.

Its subcellular location is the cell inner membrane. The enzyme catalyses a quinone + NADH + 5 H(+)(in) = a quinol + NAD(+) + 4 H(+)(out). NDH-1 shuttles electrons from NADH, via FMN and iron-sulfur (Fe-S) centers, to quinones in the respiratory chain. The immediate electron acceptor for the enzyme in this species is believed to be ubiquinone. Couples the redox reaction to proton translocation (for every two electrons transferred, four hydrogen ions are translocated across the cytoplasmic membrane), and thus conserves the redox energy in a proton gradient. This chain is NADH-quinone oxidoreductase subunit C/D, found in Chromohalobacter salexigens (strain ATCC BAA-138 / DSM 3043 / CIP 106854 / NCIMB 13768 / 1H11).